The chain runs to 492 residues: ATP synthase subunit beta, chloroplastic (492 aa).

An ATP-binding site is contributed by 170–177; the sequence is GGAGVGKT.

This sequence belongs to the ATPase alpha/beta chains family. F-type ATPases have 2 components, CF(1) - the catalytic core - and CF(0) - the membrane proton channel. CF(1) has five subunits: alpha(3), beta(3), gamma(1), delta(1), epsilon(1). CF(0) has four main subunits: a(1), b(1), b'(1) and c(9-12).

It localises to the plastid. The protein resides in the chloroplast thylakoid membrane. It carries out the reaction ATP + H2O + 4 H(+)(in) = ADP + phosphate + 5 H(+)(out). Produces ATP from ADP in the presence of a proton gradient across the membrane. The catalytic sites are hosted primarily by the beta subunits. The polypeptide is ATP synthase subunit beta, chloroplastic (Psilotum nudum (Whisk fern)).